The chain runs to 260 residues: 3'-5' ssDNA/RNA exonuclease TatD (260 aa).

A divalent metal cation is bound by residues Glu92, His128, and His153.

It belongs to the metallo-dependent hydrolases superfamily. TatD-type hydrolase family. TatD subfamily. Monomer. The cofactor is Mg(2+).

The protein resides in the cytoplasm. Its function is as follows. 3'-5' exonuclease that prefers single-stranded DNA and RNA. May play a role in the H(2)O(2)-induced DNA damage repair. In Pectobacterium parmentieri (strain WPP163) (Pectobacterium wasabiae (strain WPP163)), this protein is 3'-5' ssDNA/RNA exonuclease TatD.